Here is a 391-residue protein sequence, read N- to C-terminus: Formate-dependent phosphoribosylglycinamide formyltransferase (391 aa).

Residues 18–19 (EL) and E78 contribute to the N(1)-(5-phospho-beta-D-ribosyl)glycinamide site. ATP contacts are provided by residues R110, K151, 156-161 (SSGKGQ), 191-194 (EEFI), and E199. An ATP-grasp domain is found at 115-305 (ELAAQQLGVR…EFELHLRAIL (191 aa)). 2 residues coordinate Mg(2+): E264 and E276. N(1)-(5-phospho-beta-D-ribosyl)glycinamide is bound by residues D283, K353, and 360–361 (RR).

The protein belongs to the PurK/PurT family. Homodimer.

The catalysed reaction is N(1)-(5-phospho-beta-D-ribosyl)glycinamide + formate + ATP = N(2)-formyl-N(1)-(5-phospho-beta-D-ribosyl)glycinamide + ADP + phosphate + H(+). It functions in the pathway purine metabolism; IMP biosynthesis via de novo pathway; N(2)-formyl-N(1)-(5-phospho-D-ribosyl)glycinamide from N(1)-(5-phospho-D-ribosyl)glycinamide (formate route): step 1/1. Functionally, involved in the de novo purine biosynthesis. Catalyzes the transfer of formate to 5-phospho-ribosyl-glycinamide (GAR), producing 5-phospho-ribosyl-N-formylglycinamide (FGAR). Formate is provided by PurU via hydrolysis of 10-formyl-tetrahydrofolate. The polypeptide is Formate-dependent phosphoribosylglycinamide formyltransferase (Synechocystis sp. (strain ATCC 27184 / PCC 6803 / Kazusa)).